A 117-amino-acid chain; its full sequence is Holo-[acyl-carrier-protein] synthase (117 aa).

Asp6 and Glu55 together coordinate Mg(2+).

It belongs to the P-Pant transferase superfamily. AcpS family. The cofactor is Mg(2+).

The protein localises to the cytoplasm. The enzyme catalyses apo-[ACP] + CoA = holo-[ACP] + adenosine 3',5'-bisphosphate + H(+). Functionally, transfers the 4'-phosphopantetheine moiety from coenzyme A to a Ser of acyl-carrier-protein. The polypeptide is Holo-[acyl-carrier-protein] synthase (Chlorobaculum parvum (strain DSM 263 / NCIMB 8327) (Chlorobium vibrioforme subsp. thiosulfatophilum)).